A 297-amino-acid polypeptide reads, in one-letter code: Protein phosphatase PTC7 homolog (297 aa).

Residues 1-27 constitute a mitochondrion transit peptide; the sequence is MFSVLSCGRLVARAVFGGLSQTDSRDY. The region spanning 28–292 is the PPM-type phosphatase domain; the sequence is SLVTASCGFG…DDITVLLSIV (265 aa). Mn(2+) is bound by residues aspartate 71, glycine 72, and aspartate 216.

It belongs to the PP2C family. Mg(2+) serves as cofactor. It depends on Mn(2+) as a cofactor.

Its subcellular location is the mitochondrion matrix. It catalyses the reaction O-phospho-L-seryl-[protein] + H2O = L-seryl-[protein] + phosphate. The catalysed reaction is O-phospho-L-threonyl-[protein] + H2O = L-threonyl-[protein] + phosphate. Functionally, protein phosphatase which positively regulates biosynthesis of the ubiquinone, coenzyme Q. Dephosphorylates the ubiquinone biosynthesis protein coq7 which is likely to lead to its activation. This Xenopus laevis (African clawed frog) protein is Protein phosphatase PTC7 homolog (pptc7).